A 172-amino-acid polypeptide reads, in one-letter code: Adenine phosphoribosyltransferase (172 aa).

This sequence belongs to the purine/pyrimidine phosphoribosyltransferase family. Homodimer.

It is found in the cytoplasm. The enzyme catalyses AMP + diphosphate = 5-phospho-alpha-D-ribose 1-diphosphate + adenine. It functions in the pathway purine metabolism; AMP biosynthesis via salvage pathway; AMP from adenine: step 1/1. In terms of biological role, catalyzes a salvage reaction resulting in the formation of AMP, that is energically less costly than de novo synthesis. The sequence is that of Adenine phosphoribosyltransferase from Methanococcus maripaludis (strain DSM 14266 / JCM 13030 / NBRC 101832 / S2 / LL).